Consider the following 79-residue polypeptide: Large ribosomal subunit protein bL28 (79 aa).

Positions Met1 to Asn26 are disordered. Residues Arg11–His20 are compositionally biased toward polar residues.

The protein belongs to the bacterial ribosomal protein bL28 family.

The chain is Large ribosomal subunit protein bL28 from Coxiella burnetii (strain CbuK_Q154) (Coxiella burnetii (strain Q154)).